A 723-amino-acid polypeptide reads, in one-letter code: Homeobox protein vnd (723 aa).

Disordered regions lie at residues 1–115 (MTTS…GLAP), 224–307 (AHHG…HHHP), 465–549 (GSSG…RKRR), and 703–723 (HAHA…AWWP). Residues 10–22 (TPSKRDRDRERDN) are compositionally biased toward basic and acidic residues. Residues 23–36 (SSGLGSAGSLPASP) show a composition bias toward low complexity. The span at 37 to 48 (QSAITVSPSSPA) shows a compositional bias: polar residues. Residues 61-92 (LERKREREDREDREDRKERQERHERDRDHERF) show a composition bias toward basic and acidic residues. Residues 97 to 111 (STASTTVPTNTSSSS) show a composition bias toward low complexity. Residues 226–235 (HGSDLSHHSA) are compositionally biased toward basic and acidic residues. Residues 237 to 255 (ESTSGHRGQGSHTSPSALS) show a composition bias toward polar residues. Basic and acidic residues predominate over residues 278–289 (EADHHSTTEHHA). A compositionally biased stretch (basic residues) spans 298–307 (HPHHQQHHHP). Over residues 483–493 (NNNNNTTNNNN) the composition is skewed to low complexity. The segment covering 512 to 528 (LNEDGIEEDIDDVDDAD) has biased composition (acidic residues). A DNA-binding region (homeobox) is located at residues 545-604 (KRKRRVLFTKAQTYELERRFRQQRYLSAPEREHLASLIRLTPTQVKIWFQNHRYKTKRAQ). The span at 703–716 (HAHAHGHGHPHAHA) shows a compositional bias: basic residues.

Belongs to the NK-2 homeobox family. In terms of tissue distribution, expressed in the CNS and midgut.

The protein localises to the nucleus. Functionally, probable transcriptional regulator involved in the regulation of the proneural AS-C genes and the neurogenic genes of the enhancer of split complex. Could specifically activate proneural genes in the ventral-most neuroectoderm. The polypeptide is Homeobox protein vnd (vnd) (Drosophila melanogaster (Fruit fly)).